A 376-amino-acid chain; its full sequence is Glutamate 5-kinase (376 aa).

Lys10 contributes to the ATP binding site. Substrate is bound by residues Ser50, Asp137, and Asn149. 169–170 (TD) provides a ligand contact to ATP. The 79-residue stretch at 275–353 (RGRLVLDAGA…AEIAGVLGFM (79 aa)) folds into the PUA domain.

Belongs to the glutamate 5-kinase family.

It is found in the cytoplasm. It catalyses the reaction L-glutamate + ATP = L-glutamyl 5-phosphate + ADP. Its pathway is amino-acid biosynthesis; L-proline biosynthesis; L-glutamate 5-semialdehyde from L-glutamate: step 1/2. Catalyzes the transfer of a phosphate group to glutamate to form L-glutamate 5-phosphate. This is Glutamate 5-kinase from Alcanivorax borkumensis (strain ATCC 700651 / DSM 11573 / NCIMB 13689 / SK2).